A 122-amino-acid polypeptide reads, in one-letter code: Large ribosomal subunit protein uL14c (122 aa).

Belongs to the universal ribosomal protein uL14 family. In terms of assembly, part of the 50S ribosomal subunit.

The protein resides in the plastid. Its subcellular location is the cyanelle. Binds to 23S rRNA. The sequence is that of Large ribosomal subunit protein uL14c from Cyanophora paradoxa.